The chain runs to 105 residues: U2-lycotoxin-Ls1c (105 aa).

A signal peptide spans 1–17 (MIKYVLISALLVVAVYS). The propeptide occupies 18–41 (FTIEDSEDALLEEAEDELDTEEER). 4 disulfides stabilise this stretch: Cys-51/Cys-67, Cys-58/Cys-97, Cys-60/Cys-83, and Cys-69/Cys-81.

It belongs to the neurotoxin 04 (omega-agtx) family. 01 (type I omega-agtx) subfamily. In terms of tissue distribution, expressed by the venom gland.

It is found in the secreted. In terms of biological role, insecticidal to house crickets. It induces an excitatory slow-onset impact that leads to irreversible spastic paralysis. It also modifies human voltage-gated potassium channel Kv1.5/KCNA5. Most likely, it binds to the voltage-sensing domain of the channel, suggesting it does not block the pore but prevents its opening at physiological membrane potentials. The recombinant peptide binds to the channel in an irreversible manner and slows down the hKv1.5 current activation kinetics. It is not toxic to mice, when intracranially injected (at 0.5 ug/g mouse). The chain is U2-lycotoxin-Ls1c from Lycosa singoriensis (Wolf spider).